We begin with the raw amino-acid sequence, 195 residues long: GTP cyclohydrolase 1 (195 aa).

Zn(2+) is bound by residues C85, H88, and C157.

The protein belongs to the GTP cyclohydrolase I family. As to quaternary structure, toroid-shaped homodecamer, composed of two pentamers of five dimers.

It catalyses the reaction GTP + H2O = 7,8-dihydroneopterin 3'-triphosphate + formate + H(+). The protein operates within cofactor biosynthesis; 7,8-dihydroneopterin triphosphate biosynthesis; 7,8-dihydroneopterin triphosphate from GTP: step 1/1. This chain is GTP cyclohydrolase 1, found in Clostridium acetobutylicum (strain ATCC 824 / DSM 792 / JCM 1419 / IAM 19013 / LMG 5710 / NBRC 13948 / NRRL B-527 / VKM B-1787 / 2291 / W).